The sequence spans 753 residues: MKTSQFLSLLLLAGIAQAIVPPREPRPPTGGGNKLLTYKECVPRATISPRSTSLAWINSDEDGQYISQSDDGALILQNIVTNTNKTLVAADKVPKGYYDYWFKPDLSAVLWATNYTKQYRHSYFANYFILDIEKGSLTPLAQDQAGDIQYAQWSPMDNSIAYVRGNDLYIWNNGKTKRITENGGPDIFNGVPDWVYEEEIFGDRFALWFSPDGEYLAYLRFNETGVPTYTIPYYKNKQKIAPAYPRELEIRYPKVSAKNPTVQFHLLNIASSQETTIPVTAFPENDLVIGEVAWLSSGHDSVAYRAFNRVQDREKIVSVKVESKESKVIRERDGTDGWIDNLLSMSYIGDVNGKEYYVDISDASGWAHIYLYPVDGGKEIALTTGEWEVVAILKVDTMKKLIYFTSTKYHSTTRHVYSVSYDTKVMTPLVNDKEAAYYTASFSAKGGYYILSYQGPNVPYQELYSTKDSKKPLKTITSNDALLEKLKEYKLPKVSFFEIKLPSGETLNVKQRLPPNFNPHKKYPVLFTPYGGPGAQEVSQAWNSLDFKSYITSDPELEYVTWTVDNRGTGYKGRKFRSAVAKRLGFLEPQDQVFAAKELLKNRWADKDHIGIWGWSYGGFLTAKTLETDSGVFTFGISTAPVSDFRLYDSMYTERYMKTVELNADGCDDNVHFQNAAVLSNTLMNGGVTADKLTTQWFTDSDHGIRYDMDSTYQYKQLAKMVYDQKQRRPERPPMHQWSKRVLAALFGERAEE.

The N-terminal stretch at 1–18 (MKTSQFLSLLLLAGIAQA) is a signal peptide. Asparagine 84, asparagine 114, and asparagine 222 each carry an N-linked (GlcNAc...) asparagine glycan. Residues serine 616, aspartate 668, and histidine 703 each act as charge relay system in the active site.

This sequence belongs to the peptidase S9B family.

The protein resides in the secreted. The enzyme catalyses Release of an N-terminal dipeptide, Xaa-Yaa-|-Zaa-, from a polypeptide, preferentially when Yaa is Pro, provided Zaa is neither Pro nor hydroxyproline.. Its function is as follows. Extracellular dipeptidyl-peptidase which removes N-terminal dipeptides sequentially from polypeptides having unsubstituted N-termini provided that the penultimate residue is proline. Contributes to pathogenicity. This chain is Probable dipeptidyl peptidase 4 (DPP4), found in Trichophyton verrucosum (strain HKI 0517).